The primary structure comprises 122 residues: uncharacterized protein (122 aa).

It localises to the mitochondrion. This is an uncharacterized protein from Claviceps purpurea (Ergot fungus).